The primary structure comprises 404 residues: Tryptophan synthase beta chain (404 aa).

Lysine 94 is modified (N6-(pyridoxal phosphate)lysine).

Belongs to the TrpB family. Tetramer of two alpha and two beta chains. Pyridoxal 5'-phosphate serves as cofactor.

The catalysed reaction is (1S,2R)-1-C-(indol-3-yl)glycerol 3-phosphate + L-serine = D-glyceraldehyde 3-phosphate + L-tryptophan + H2O. Its pathway is amino-acid biosynthesis; L-tryptophan biosynthesis; L-tryptophan from chorismate: step 5/5. Functionally, the beta subunit is responsible for the synthesis of L-tryptophan from indole and L-serine. This is Tryptophan synthase beta chain from Staphylococcus aureus (strain USA300).